A 314-amino-acid polypeptide reads, in one-letter code: Formimidoylglutamase (314 aa).

Residues His127, Asp151, His153, Asp155, Asp239, and Asp241 each contribute to the Mn(2+) site.

It belongs to the arginase family. It depends on Mn(2+) as a cofactor.

It carries out the reaction N-formimidoyl-L-glutamate + H2O = formamide + L-glutamate. Its pathway is amino-acid degradation; L-histidine degradation into L-glutamate; L-glutamate from N-formimidoyl-L-glutamate (hydrolase route): step 1/1. Catalyzes the conversion of N-formimidoyl-L-glutamate to L-glutamate and formamide. The chain is Formimidoylglutamase from Corynebacterium efficiens (strain DSM 44549 / YS-314 / AJ 12310 / JCM 11189 / NBRC 100395).